The following is a 611-amino-acid chain: tRNA uridine 5-carboxymethylaminomethyl modification enzyme MnmG (611 aa).

Residue 14-19 coordinates FAD; the sequence is GAGHAG. 274-288 is an NAD(+) binding site; it reads GPRYCPSIEDKIVKF.

The protein belongs to the MnmG family. Homodimer. Heterotetramer of two MnmE and two MnmG subunits. FAD serves as cofactor.

Its subcellular location is the cytoplasm. Its function is as follows. NAD-binding protein involved in the addition of a carboxymethylaminomethyl (cmnm) group at the wobble position (U34) of certain tRNAs, forming tRNA-cmnm(5)s(2)U34. The sequence is that of tRNA uridine 5-carboxymethylaminomethyl modification enzyme MnmG from Chlamydia caviae (strain ATCC VR-813 / DSM 19441 / 03DC25 / GPIC) (Chlamydophila caviae).